The sequence spans 595 residues: MASTFSATTSSCNLSSSAAISSFPLAAGKRNANKVVLPRKNRNVKVSAMAKELHFNKDGSAIKKLQNGVNKLADLVGVTLGPKGRNVVLESKYGSPKIVNDGVTVAKEVELEDPVENIGAKLVRQAAAKTNDLAGDGTTTSVVLAQGLIAEGVKVVAAGANPVLITRGIEKTSKALVAELKKMSKEVEDSELADVAAVSAGNNHEVGNMIAEALSKVGRKGVVTLEEGKSAENSLYVVEGMQFDRGYISPYFVTDSEKMTVEFENCKLLLVDKKITNARDLINILEDAIRSGFPIVIIAEDIEQEALATLVVNKLRGSLKIAALKAPGFGERKSQYLDDIAILTGGTVIREEVGLTLDKADKEVLGNAAKVVLTKDTTTIVGDGSTQEAVNKRVSQIKNQIEAAEQEYEKEKLSERIAKLSGGVAVIQVGAQTETELKEKKLRVEDALNATKAAVEEGIVVGGGCTLLRLASKVDAIKDTLANDEEKVGADIVKRALSYPLKLIAKNAGVNGSVVSEKVLSSDNPKYGYNAATGKYEDLMAAGIIDPTKVVRCCLEHASSVAKTFLMSDCVVVEIKEPESAPVGNPMDNSGYGNI.

Residues 1-49 constitute a chloroplast transit peptide; that stretch reads MASTFSATTSSCNLSSSAAISSFPLAAGKRNANKVVLPRKNRNVKVSAM.

It belongs to the chaperonin (HSP60) family. As to quaternary structure, oligomer of probably six alpha and six beta subunits.

Its subcellular location is the plastid. It localises to the chloroplast. Functionally, this protein binds RuBisCO small and large subunits and is implicated in the assembly of the enzyme oligomer. This is RuBisCO large subunit-binding protein subunit beta, chloroplastic from Pisum sativum (Garden pea).